The chain runs to 613 residues: V-type proton ATPase catalytic subunit A isoform 2 (613 aa).

240 to 247 serves as a coordination point for ATP; it reads GAFGCGKT.

This sequence belongs to the ATPase alpha/beta chains family. In terms of assembly, V-ATPase is a heteromultimeric enzyme composed of a peripheral catalytic V1 complex (main components: subunits A, B, C, D, E, and F) attached to an integral membrane V0 proton pore complex (main component: the proteolipid protein).

It catalyses the reaction ATP + H2O + 4 H(+)(in) = ADP + phosphate + 5 H(+)(out). Catalytic subunit of the peripheral V1 complex of vacuolar ATPase. V-ATPase vacuolar ATPase is responsible for acidifying a variety of intracellular compartments in eukaryotic cells. This chain is V-type proton ATPase catalytic subunit A isoform 2, found in Acetabularia acetabulum (Mermaid's wine glass).